Here is a 449-residue protein sequence, read N- to C-terminus: Packaging protein 1 (449 aa).

Positions 1–10 (MESRGKHRLK) are enriched in basic residues. Residues 1–64 (MESRGKHRLK…SSNSILHCPP (64 aa)) form a disordered region. The segment covering 11-25 (KNGESKENLGEHEQA) has biased composition (basic and acidic residues). Residues 35–59 (SADSLSSPVAEPNFSSPGGRSSNSI) show a composition bias toward polar residues. 168–175 (GPTGSGKS) lines the ATP pocket. Residues 437 to 449 (TAYSKKCDKLANK) are DNA-binding.

It belongs to the adenoviridae packaging protein 1 family. In terms of assembly, homodimer. Part of a genome packaging complex composed of packaging proteins 1, 2 and 3; this complex specifically binds to the packaging sequence on the left end of viral genomic DNA and performs packaging of the viral genome. Interacts with protein 33K.

It is found in the virion. It localises to the host nucleus. The protein resides in the host nucleoplasm. The protein localises to the host nucleolus. Its function is as follows. Component of the packaging machinery which encapsidates the viral DNA into preformed capsids and transcriptional activator of the viral major late promoter (MLP). Binds, along with packaging proteins 2 and 3, to the specific packaging sequence on the left end of viral genomic DNA and displays ATPase activity thereby providing the power stroke of the packaging machinery. The activity of packaging protein IVa2 is stimulated by protein 33K which acts as a terminase. May be the protein that pumps DNA into the capsid powered by ATP hydrolysis. Specifically binds to the 5'-CG-3' nucleotides of the repeats making up the packaging sequence. Component of the DEF-A and DEF-B transcription factors that bind downstream elements of the major late promoter (MLP), and stimulate transcription from the MLP after initiation of viral DNA replication. DEF-A is a heterodimer packaging proteins 1 and 2 and DEF-B is a homodimer of packaging protein 1. This Mus musculus (Mouse) protein is Packaging protein 1.